The chain runs to 245 residues: tRNA1(Val) (adenine(37)-N6)-methyltransferase (245 aa).

Belongs to the methyltransferase superfamily. tRNA (adenine-N(6)-)-methyltransferase family.

It is found in the cytoplasm. The enzyme catalyses adenosine(37) in tRNA1(Val) + S-adenosyl-L-methionine = N(6)-methyladenosine(37) in tRNA1(Val) + S-adenosyl-L-homocysteine + H(+). Functionally, specifically methylates the adenine in position 37 of tRNA(1)(Val) (anticodon cmo5UAC). In Shigella boydii serotype 18 (strain CDC 3083-94 / BS512), this protein is tRNA1(Val) (adenine(37)-N6)-methyltransferase.